A 259-amino-acid chain; its full sequence is GTP cyclohydrolase FolE2 (259 aa).

It belongs to the GTP cyclohydrolase IV family.

The enzyme catalyses GTP + H2O = 7,8-dihydroneopterin 3'-triphosphate + formate + H(+). Its pathway is cofactor biosynthesis; 7,8-dihydroneopterin triphosphate biosynthesis; 7,8-dihydroneopterin triphosphate from GTP: step 1/1. Converts GTP to 7,8-dihydroneopterin triphosphate. This is GTP cyclohydrolase FolE2 from Halorhodospira halophila (strain DSM 244 / SL1) (Ectothiorhodospira halophila (strain DSM 244 / SL1)).